Consider the following 471-residue polypeptide: Putative multidrug resistance protein MdtD (471 aa).

Residues 1-11 (MTDLPDSTRWR) lie on the Periplasmic side of the membrane. A helical transmembrane segment spans residues 12 to 32 (LWIVAFGFFMQSLDTTIVNTA). Topologically, residues 33–48 (LPSMAQSLGESPLHMH) are cytoplasmic. Residues 49 to 69 (MVIVSYVLTVAVMLPASGWLA) traverse the membrane as a helical segment. Topologically, residues 70–76 (DKVGVRN) are periplasmic. The helical transmembrane segment at 77–97 (IFFTAIVLFTLGSLFCALSGT) threads the bilayer. Over 98 to 101 (LNEL) the chain is Cytoplasmic. Residues 102–124 (LLARALQGVGGAMMVPVGRLTVM) form a helical membrane-spanning segment. At 125 to 137 (KIVPREQYMAAMT) the chain is on the periplasmic side. The helical transmembrane segment at 138–158 (FVTLPGQVGPLLGPALGGLLV) threads the bilayer. The Cytoplasmic portion of the chain corresponds to 159 to 164 (EYASWH). Residues 165–185 (WIFLINIPVGIIGAIATLMLM) traverse the membrane as a helical segment. Residues 186–196 (PNYTMQTRRFD) lie on the Periplasmic side of the membrane. The helical transmembrane segment at 197–217 (LSGFLLLAVGMAVLTLALDGS) threads the bilayer. The Cytoplasmic portion of the chain corresponds to 218–224 (KGTGLSP). The chain crosses the membrane as a helical span at residues 225–245 (LAIAGLVAVGVVALVLYLLHA). Topologically, residues 246–262 (QNNNRALFSLKLFRTRT) are periplasmic. Residues 263–283 (FSLGLAGSFAGRIGSGMLPFM) traverse the membrane as a helical segment. Residues 284–285 (TP) are Cytoplasmic-facing. A helical transmembrane segment spans residues 286-306 (VFLQIGLGFSPFHAGLMMIPM). The Periplasmic portion of the chain corresponds to 307 to 341 (VLGSMGMKRIVVQVVNRFGYRRVLVATTLGLSLVT). A helical transmembrane segment spans residues 342–362 (LLFMTTALLGWYYVLPFVLFL). At 363–395 (QGMVNSTRFSSMNTLTLKDLPDNLASSGNSLLS) the chain is on the cytoplasmic side. Residues 396–416 (MIMQLSMSIGVTIAGLLLGLF) traverse the membrane as a helical segment. Residues 417-430 (GSQHVSVDSGTTQT) are Periplasmic-facing. A helical transmembrane segment spans residues 431 to 451 (VFMYTWLSMASIIALPAFIFA). The Cytoplasmic segment spans residues 452–471 (RVPNDTHQNVAISRRKRSAQ).

Belongs to the major facilitator superfamily. TCR/Tet family.

The protein resides in the cell inner membrane. In Escherichia coli O6:K15:H31 (strain 536 / UPEC), this protein is Putative multidrug resistance protein MdtD.